Consider the following 133-residue polypeptide: Small ribosomal subunit protein uS8 (133 aa).

The protein belongs to the universal ribosomal protein uS8 family. In terms of assembly, part of the 30S ribosomal subunit. Contacts proteins S5 and S12.

In terms of biological role, one of the primary rRNA binding proteins, it binds directly to 16S rRNA central domain where it helps coordinate assembly of the platform of the 30S subunit. The protein is Small ribosomal subunit protein uS8 of Koribacter versatilis (strain Ellin345).